Consider the following 543-residue polypeptide: Neurofilament light polypeptide (543 aa).

An N-acetylserine modification is found at Ser-2. Positions Ser-2–Ala-92 are head. O-linked (GlcNAc) threonine glycosylation occurs at Thr-21. At Arg-23 the chain carries Asymmetric dimethylarginine; alternate. Arg-23 carries the omega-N-methylarginine; alternate modification. Ser-27 is a glycosylation site (O-linked (GlcNAc) serine). The residue at position 30 (Arg-30) is an Omega-N-methylarginine. Tyr-43 carries the phosphotyrosine modification. A phosphoserine mark is found at Ser-56, Ser-67, and Ser-103. The IF rod domain maps to Glu-90 to Leu-400. Residues Gln-93 to Val-124 are coil 1A. The linker 1 stretch occupies residues Leu-125–Ala-137. Residues Leu-138 to Leu-234 are coil 1B. Positions Gln-235–Pro-252 are linker 12. Positions Asp-253 to Lys-271 are coil 2A. The segment at Asn-272–Phe-280 is linker 2. The tract at residues Lys-281–Glu-396 is coil 2B. The interval Ala-381–Lys-391 is epitope; recognized by IF-specific monoclonal antibody. Residues Glu-397–Tyr-443 are tail, subdomain A. The tract at residues Glu-397 to Asp-543 is tail. The interval Thr-444 to Asp-543 is tail, subdomain B (acidic). Residues Lys-462 to Asp-543 are disordered. Positions Pro-471–Glu-525 are enriched in acidic residues. 2 positions are modified to phosphoserine: Ser-472 and Ser-502. At Thr-520 the chain carries Phosphothreonine. The span at Glu-526–Asp-543 shows a compositional bias: basic and acidic residues.

This sequence belongs to the intermediate filament family. In terms of assembly, forms homodimers (in vitro). Forms heterodimers with NEFH or NEFM; which can further hetero-oligomerize (in vitro). Forms heterodimers with INA (in vitro). Interacts with ARHGEF28. Interacts with TRIM2. Post-translationally, O-glycosylated. Phosphorylated in the head and rod regions by the PKC kinase PKN1, leading to the inhibition of polymerization. In terms of processing, ubiquitinated in the presence of TRIM2 and UBE2D1.

It localises to the cell projection. The protein localises to the axon. Its subcellular location is the cytoplasm. It is found in the cytoskeleton. Its function is as follows. Neurofilaments usually contain three intermediate filament proteins: NEFL, NEFM, and NEFH which are involved in the maintenance of neuronal caliber. May additionally cooperate with the neuronal intermediate filament proteins PRPH and INA to form neuronal filamentous networks. The chain is Neurofilament light polypeptide (NEFL) from Homo sapiens (Human).